The sequence spans 197 residues: ATP synthase subunit delta', mitochondrial (197 aa).

The transit peptide at 1–19 (MFRRATSTFLSRASATRRF) directs the protein to the mitochondrion.

It belongs to the ATPase epsilon chain family. In terms of assembly, F-type ATPases have 2 components, CF(1) - the catalytic core - and CF(0) - the membrane proton channel. CF(1) has five subunits: alpha(3), beta(3), gamma(1), delta(1), epsilon(1). CF(0) has three main subunits: a, b and c.

It is found in the mitochondrion. It localises to the mitochondrion inner membrane. Mitochondrial membrane ATP synthase (F(1)F(0) ATP synthase or Complex V) produces ATP from ADP in the presence of a proton gradient across the membrane which is generated by electron transport complexes of the respiratory chain. F-type ATPases consist of two structural domains, F(1) - containing the extramembraneous catalytic core, and F(0) - containing the membrane proton channel, linked together by a central stalk and a peripheral stalk. During catalysis, ATP turnover in the catalytic domain of F(1) is coupled via a rotary mechanism of the central stalk subunits to proton translocation. Part of the complex F(1) domain and of the central stalk which is part of the complex rotary element. Rotation of the central stalk against the surrounding alpha(3)beta(3) subunits leads to hydrolysis of ATP in three separate catalytic sites on the beta subunits. This Pisum sativum (Garden pea) protein is ATP synthase subunit delta', mitochondrial.